The chain runs to 417 residues: Gamma-glutamyl phosphate reductase (417 aa).

It belongs to the gamma-glutamyl phosphate reductase family.

The protein resides in the cytoplasm. It carries out the reaction L-glutamate 5-semialdehyde + phosphate + NADP(+) = L-glutamyl 5-phosphate + NADPH + H(+). Its pathway is amino-acid biosynthesis; L-proline biosynthesis; L-glutamate 5-semialdehyde from L-glutamate: step 2/2. Functionally, catalyzes the NADPH-dependent reduction of L-glutamate 5-phosphate into L-glutamate 5-semialdehyde and phosphate. The product spontaneously undergoes cyclization to form 1-pyrroline-5-carboxylate. The chain is Gamma-glutamyl phosphate reductase from Phocaeicola vulgatus (strain ATCC 8482 / DSM 1447 / JCM 5826 / CCUG 4940 / NBRC 14291 / NCTC 11154) (Bacteroides vulgatus).